Here is a 416-residue protein sequence, read N- to C-terminus: Pectin acetylesterase 3 (416 aa).

An N-terminal signal peptide occupies residues 1-25 (MKSVLRIAAAIFWLWLFIVLGVIGS). The N-linked (GlcNAc...) asparagine glycan is linked to Asn131. Catalysis depends on charge relay system residues Ser198 and Asp294. Asn324 carries N-linked (GlcNAc...) asparagine glycosylation. Residue His361 is the Charge relay system of the active site.

The protein belongs to the pectinacetylesterase family.

Its subcellular location is the secreted. It is found in the cell wall. Functionally, hydrolyzes acetyl esters in homogalacturonan regions of pectin. In type I primary cell wall, galacturonic acid residues of pectin can be acetylated at the O-2 and O-3 positions. Decreasing the degree of acetylation of pectin gels in vitro alters their physical properties. In Arabidopsis thaliana (Mouse-ear cress), this protein is Pectin acetylesterase 3.